Consider the following 132-residue polypeptide: Ribosome-binding factor A (132 aa).

Belongs to the RbfA family. In terms of assembly, monomer. Binds 30S ribosomal subunits, but not 50S ribosomal subunits or 70S ribosomes.

It is found in the cytoplasm. In terms of biological role, one of several proteins that assist in the late maturation steps of the functional core of the 30S ribosomal subunit. Associates with free 30S ribosomal subunits (but not with 30S subunits that are part of 70S ribosomes or polysomes). Required for efficient processing of 16S rRNA. May interact with the 5'-terminal helix region of 16S rRNA. In Pseudomonas putida (strain GB-1), this protein is Ribosome-binding factor A.